Consider the following 121-residue polypeptide: Alpha-lactalbumin (121 aa).

The 121-residue stretch at 1-121 folds into the C-type lysozyme domain; that stretch reads IDYRKCQASQ…CLEDLDQWRC (121 aa). 4 cysteine pairs are disulfide-bonded: cysteine 6–cysteine 121, cysteine 28–cysteine 112, cysteine 61–cysteine 77, and cysteine 73–cysteine 91. A glycan (N-linked (GlcNAc...) asparagine) is linked at asparagine 44. Positions 79, 82, 84, 87, and 88 each coordinate Ca(2+).

It belongs to the glycosyl hydrolase 22 family. As to quaternary structure, lactose synthase (LS) is a heterodimer of a catalytic component, beta1,4-galactosyltransferase (beta4Gal-T1) and a regulatory component, alpha-lactalbumin (LA). As to expression, mammary gland specific. Secreted in milk.

The protein localises to the secreted. Regulatory subunit of lactose synthase, changes the substrate specificity of galactosyltransferase in the mammary gland making glucose a good acceptor substrate for this enzyme. This enables LS to synthesize lactose, the major carbohydrate component of milk. In other tissues, galactosyltransferase transfers galactose onto the N-acetylglucosamine of the oligosaccharide chains in glycoproteins. This Notamacropus rufogriseus (Red-necked wallaby) protein is Alpha-lactalbumin (LALBA).